Here is a 770-residue protein sequence, read N- to C-terminus: Pyrophosphate-energized vacuolar membrane proton pump 1 (770 aa).

Topologically, residues 1–9 (MVAPALLPE) are intravacuolar. A helical transmembrane segment spans residues 10 to 36 (LWTEILVPICAVIGIAFSLFQWYVVSR). Residues 37–88 (VKLTSDLGASSSGGANNGKNGYGDYLIEEEEGVNDQSVVAKCAEIQTAISEG) are Cytoplasmic-facing. Residues 89–118 (ATSFLFTEYKYVGVFMIFFAAVIFVFLGSV) traverse the membrane as a helical segment. At 119–139 (EGFSTDNKPCTYDTTRTCKPA) the chain is on the intravacuolar side. An intrachain disulfide couples Cys-128 to Cys-136. Residues 140–167 (LATAAFSTIAFVLGAVTSVLSGFLGMKI) form a helical membrane-spanning segment. Topologically, residues 168 to 190 (ATYANARTTLEARKGVGKAFIVA) are cytoplasmic. The helical transmembrane segment at 191-220 (FRSGAVMGFLLAASGLLVLYITINVFKIYY) threads the bilayer. Residues 221-223 (GDD) are Intravacuolar-facing. The chain crosses the membrane as a helical span at residues 224–252 (WEGLFEAITGYGLGGSSMALFGRVGGGIY). The Cytoplasmic segment spans residues 253-290 (TKAADVGADLVGKIERNIPEDDPRNPAVIADNVGDNVG). A substrate-binding site is contributed by Lys-254. Residues Asp-257, Asp-261, and Asp-287 each contribute to the Mg(2+) site. A helical membrane pass occupies residues 291-316 (DIAGMGSDLFGSYAEASCAALVVASI). Topologically, residues 317-324 (SSFGINHD) are intravacuolar. The chain crosses the membrane as a helical span at residues 325-350 (FTAMCYPLLISSMGILVCLITTLFAT). At 351–358 (DFFEIKLV) the chain is on the cytoplasmic side. Residues 359 to 386 (KEIEPALKNQLIISTVIMTVGIAIVSWV) form a helical membrane-spanning segment. The Intravacuolar portion of the chain corresponds to 387 to 405 (GLPTSFTIFNFGTQKVVKN). A helical transmembrane segment spans residues 406-429 (WQLFLCVCVGLWAGLIIGFVTEYY). Topologically, residues 430-451 (TSNAYSPVQDVADSCRTGAATN) are cytoplasmic. The helical transmembrane segment at 452–476 (VIFGLALGYKSVIIPIFAIAISIFV) threads the bilayer. Over 477–482 (SFSFAA) the chain is Intravacuolar. The helical transmembrane segment at 483–509 (MYGVAVAALGMLSTIATGLAIDAYGPI) threads the bilayer. The Cytoplasmic portion of the chain corresponds to 510-538 (SDNAGGIAEMAGMSHRIRERTDALDAAGN). Residues Asp-511 and Asn-538 each contribute to the Mg(2+) site. The helical transmembrane segment at 539–567 (TTAAIGKGFAIGSAALVSLALFGAFVSRA) threads the bilayer. Over 568 to 577 (GIHTVDVLTP) the chain is Intravacuolar. The chain crosses the membrane as a helical span at residues 578–606 (KVIIGLLVGAMLPYWFSAMTMKSVGSAAL). The Cytoplasmic portion of the chain corresponds to 607–635 (KMVEEVRRQFNTIPGLMEGTAKPDYATCV). The helical transmembrane segment at 636-664 (KISTDASIKEMIPPGCLVMLTPLIVGFFF) threads the bilayer. Gly-665 is a topological domain (intravacuolar). Residues 666–693 (VETLSGVLAGSLVSGVQIAISASNTGGA) form a helical membrane-spanning segment. The Cytoplasmic segment spans residues 694–736 (WDNAKKYIEAGVSEHAKSLGPKGSEPHKAAVIGDTIGDPLKDT). Asp-695 and Asp-731 together coordinate Mg(2+). A substrate-binding site is contributed by Lys-734. Residues 737-762 (SGPSLNILIKLMAVESLVFAPFFATH) traverse the membrane as a helical segment. The Intravacuolar segment spans residues 763–770 (GGILFKYF).

The protein belongs to the H(+)-translocating pyrophosphatase (TC 3.A.10) family. K(+)-stimulated subfamily. In terms of assembly, monomer. As to expression, ubiquitous (at protein level). Mostly expressed in vascular tissues, meristems and root pericycle.

It is found in the vacuole membrane. It localises to the endosome membrane. The protein resides in the cell membrane. The catalysed reaction is diphosphate + H2O + H(+)(in) = 2 phosphate + 2 H(+)(out). Activated by K(+) and Mg(2+). Inhibited by Ca(2+), N,N'-dicyclohexylcarbodiimide (DCCD), N-ethylmaleimide (NEM) and aminomethylenediphosphonate (AMDP), and, to a lower extent, by fluoride (KF). Its function is as follows. Contributes to the transtonoplast (from cytosol to vacuole lumen) H(+)-electrochemical potential difference. It establishes a proton gradient of similar and often greater magnitude than the H(+)-ATPase on the same membrane. In addition, facilitates auxin transport by modulating apoplastic pH and regulates auxin-mediated developmental processes. Confers tolerance to NaCl and to drought by increasing ion retention. This Arabidopsis thaliana (Mouse-ear cress) protein is Pyrophosphate-energized vacuolar membrane proton pump 1 (AVP1).